The primary structure comprises 152 residues: Ribosome maturation factor RimP (152 aa).

This sequence belongs to the RimP family.

Its subcellular location is the cytoplasm. Required for maturation of 30S ribosomal subunits. In Pseudomonas putida (strain GB-1), this protein is Ribosome maturation factor RimP.